We begin with the raw amino-acid sequence, 510 residues long: MATSDQDRRHRVTRNRPPIARPSTSSSRPVVSPPRSKVSKRVLLRVASVACGIQFGWALQLSLLTPYVQELGIPHAWASVIWLCGPLSGLFVQPLVGHSSDRCTSKYGRRRPFIVAGAVAISISVMVIGHAADIGWAFGDREGKIKPRAIVAFVLGFWILDVANNMTQGPCRALLADLTENDNRRTRVANGYFSLFMAVGNVLGYATGSYNGWYKIFTFTKTVACNVECANLKSAFYIDVVFIAITTILSVSAAHEVPLASLASEAHGQTSGTDEAFLSEIFGTFRYFPGNVWIILLVTALTWIGWFPFILFDTDWMGREIYGGEPNIGTSYSAGVSMGALGLMLNSVFLGITSVLMEKLCRKWGAGFVWGISNILMAICFLGMIITSFVASHLGYIGHEQPPASIVFAAVLIFTILGIPLAITYSVPYALISIRIESLGLGQGLSLGVLNLAIVIPQVIVSVGSGPWDQLFGGGNSPALAVGAATGFIGGIVAILALPRTRIQKPIPLP.

Residues 1-34 are disordered; it reads MATSDQDRRHRVTRNRPPIARPSTSSSRPVVSPP. At 1 to 45 the chain is on the cytoplasmic side; the sequence is MATSDQDRRHRVTRNRPPIARPSTSSSRPVVSPPRSKVSKRVLLR. The span at 21-34 shows a compositional bias: low complexity; that stretch reads RPSTSSSRPVVSPP. Ser-23 carries the phosphoserine modification. Residues 46–66 form a helical membrane-spanning segment; the sequence is VASVACGIQFGWALQLSLLTP. Topologically, residues 67–71 are extracellular; it reads YVQEL. Residues 72-92 traverse the membrane as a helical segment; sequence GIPHAWASVIWLCGPLSGLFV. Topologically, residues 93–111 are cytoplasmic; that stretch reads QPLVGHSSDRCTSKYGRRR. A helical membrane pass occupies residues 112-132; sequence PFIVAGAVAISISVMVIGHAA. The Extracellular segment spans residues 133–148; it reads DIGWAFGDREGKIKPR. Residues 149–169 form a helical membrane-spanning segment; that stretch reads AIVAFVLGFWILDVANNMTQG. The Cytoplasmic segment spans residues 170 to 187; it reads PCRALLADLTENDNRRTR. Residues 188–208 form a helical membrane-spanning segment; the sequence is VANGYFSLFMAVGNVLGYATG. The Extracellular portion of the chain corresponds to 209–233; that stretch reads SYNGWYKIFTFTKTVACNVECANLK. The helical transmembrane segment at 234-254 threads the bilayer; that stretch reads SAFYIDVVFIAITTILSVSAA. At 255–291 the chain is on the cytoplasmic side; sequence HEVPLASLASEAHGQTSGTDEAFLSEIFGTFRYFPGN. The helical transmembrane segment at 292-312 threads the bilayer; that stretch reads VWIILLVTALTWIGWFPFILF. Residues 313 to 335 are Extracellular-facing; sequence DTDWMGREIYGGEPNIGTSYSAG. The chain crosses the membrane as a helical span at residues 336–356; sequence VSMGALGLMLNSVFLGITSVL. Topologically, residues 357–365 are cytoplasmic; that stretch reads MEKLCRKWG. The chain crosses the membrane as a helical span at residues 366 to 386; it reads AGFVWGISNILMAICFLGMII. The Extracellular portion of the chain corresponds to 387–402; that stretch reads TSFVASHLGYIGHEQP. A helical membrane pass occupies residues 403-423; the sequence is PASIVFAAVLIFTILGIPLAI. Topologically, residues 424–443 are cytoplasmic; it reads TYSVPYALISIRIESLGLGQ. A helical transmembrane segment spans residues 444-464; the sequence is GLSLGVLNLAIVIPQVIVSVG. The Extracellular segment spans residues 465–477; sequence SGPWDQLFGGGNS. Residues 478 to 498 form a helical membrane-spanning segment; the sequence is PALAVGAATGFIGGIVAILAL. Topologically, residues 499–510 are cytoplasmic; it reads PRTRIQKPIPLP.

Belongs to the glycoside-pentoside-hexuronide (GPH) cation symporter transporter (TC 2.A.2.4) family. Homodimer. Interacts with SUC2 and SUC3. In terms of tissue distribution, expressed in sink tissues, mostly in minor veins of sink leaves. Localized in companion cells.

The protein resides in the cell membrane. The enzyme catalyses sucrose(out) + H(+)(out) = sucrose(in) + H(+)(in). Its pathway is glycan biosynthesis; sucrose metabolism. Responsible for the transport of sucrose into the cell, with the concomitant uptake of protons (symport system). Can also transport maltose at a lesser rate. May also transport biotin. The sequence is that of Sucrose transport protein SUC4 from Arabidopsis thaliana (Mouse-ear cress).